The following is a 163-amino-acid chain: Choriogonadotropin subunit beta variant 2 (163 aa).

A signal peptide spans 1 to 18 (MSKGLLLLLLLSMGGTWA). Intrachain disulfides connect Cys27–Cys75, Cys41–Cys90, Cys44–Cys128, Cys52–Cys106, Cys56–Cys108, and Cys111–Cys118. 2 N-linked (GlcNAc...) asparagine glycosylation sites follow: Asn31 and Asn48. Residues 129–163 (DDPRFQASSSSKAPPPSLPSPSRLPGPSDTPILPQ) form a disordered region. The span at 141–152 (APPPSLPSPSRL) shows a compositional bias: pro residues.

Belongs to the glycoprotein hormones subunit beta family. In terms of tissue distribution, expressed in placenta, testis and pituitary.

The protein localises to the secreted. This is Choriogonadotropin subunit beta variant 2 (CGB2) from Homo sapiens (Human).